We begin with the raw amino-acid sequence, 105 residues long: Acylphosphatase (105 aa).

Residues 16–105 form the Acylphosphatase-like domain; that stretch reads RLTAWVRGRV…RGGYSGFTQA (90 aa). Residues Arg31 and Asn49 contribute to the active site.

It belongs to the acylphosphatase family.

It carries out the reaction an acyl phosphate + H2O = a carboxylate + phosphate + H(+). The polypeptide is Acylphosphatase (acyP) (Acidothermus cellulolyticus (strain ATCC 43068 / DSM 8971 / 11B)).